Consider the following 370-residue polypeptide: 3-dehydroquinate synthase (370 aa).

Residues 112-116 (GVIGD), 136-137 (TT), Lys149, Lys158, and 176-179 (TLKT) contribute to the NAD(+) site. Glu191, His256, and His273 together coordinate Zn(2+).

The protein belongs to the sugar phosphate cyclases superfamily. Dehydroquinate synthase family. It depends on Co(2+) as a cofactor. Requires Zn(2+) as cofactor. NAD(+) serves as cofactor.

Its subcellular location is the cytoplasm. It catalyses the reaction 7-phospho-2-dehydro-3-deoxy-D-arabino-heptonate = 3-dehydroquinate + phosphate. It participates in metabolic intermediate biosynthesis; chorismate biosynthesis; chorismate from D-erythrose 4-phosphate and phosphoenolpyruvate: step 2/7. Functionally, catalyzes the conversion of 3-deoxy-D-arabino-heptulosonate 7-phosphate (DAHP) to dehydroquinate (DHQ). This is 3-dehydroquinate synthase from Prochlorococcus marinus (strain MIT 9211).